The following is a 470-amino-acid chain: Serine carboxypeptidase ctsa-4.1 (470 aa).

A signal peptide spans 1–19 (MKLLSILFIFVSSYSFCLA). Residue N132 is glycosylated (N-linked (GlcNAc...) asparagine). The active site involves S169. Residue N316 is glycosylated (N-linked (GlcNAc...) asparagine). Residue D380 is part of the active site. A glycan (N-linked (GlcNAc...) asparagine) is linked at N396. H441 is a catalytic residue.

It belongs to the peptidase S10 family.

The catalysed reaction is Release of a C-terminal amino acid with broad specificity.. The sequence is that of Serine carboxypeptidase ctsa-4.1 from Caenorhabditis elegans.